The primary structure comprises 224 residues: Small ribosomal subunit protein uS3 (224 aa).

Residues 38–106 enclose the KH type-2 domain; the sequence is LREYVKEKLG…EVYLNVVEVR (69 aa).

It belongs to the universal ribosomal protein uS3 family. Part of the 30S ribosomal subunit. Forms a tight complex with proteins S10 and S14.

Binds the lower part of the 30S subunit head. Binds mRNA in the 70S ribosome, positioning it for translation. In Anaeromyxobacter sp. (strain Fw109-5), this protein is Small ribosomal subunit protein uS3.